Reading from the N-terminus, the 217-residue chain is Large ribosomal subunit protein uL1 (217 aa).

It belongs to the universal ribosomal protein uL1 family. Component of the large ribosomal subunit (LSU). Mature N.crassa ribosomes consist of a small (40S) and a large (60S) subunit. The 40S small subunit contains 1 molecule of ribosomal RNA (18S rRNA) and at least 32 different proteins. The large 60S subunit contains 3 rRNA molecules (26S, 5.8S and 5S rRNA) and at least 42 different proteins. uL1 forms part of the L1 stalk.

Its subcellular location is the cytoplasm. Its function is as follows. Component of the ribosome, a large ribonucleoprotein complex responsible for the synthesis of proteins in the cell. The small ribosomal subunit (SSU) binds messenger RNAs (mRNAs) and translates the encoded message by selecting cognate aminoacyl-transfer RNA (tRNA) molecules. The large subunit (LSU) contains the ribosomal catalytic site termed the peptidyl transferase center (PTC), which catalyzes the formation of peptide bonds, thereby polymerizing the amino acids delivered by tRNAs into a polypeptide chain. The nascent polypeptides leave the ribosome through a tunnel in the LSU and interact with protein factors that function in enzymatic processing, targeting, and the membrane insertion of nascent chains at the exit of the ribosomal tunnel. uL1 forms part of the L1 stalk, a mobile element that plays a role in evacuating the exit-site tRNA. The chain is Large ribosomal subunit protein uL1 (crp-74) from Neurospora crassa (strain ATCC 24698 / 74-OR23-1A / CBS 708.71 / DSM 1257 / FGSC 987).